We begin with the raw amino-acid sequence, 458 residues long: RuvB-like helicase 1 (458 aa).

Residues 1 to 18 (MVQITEVKENQSSRESRT) show a composition bias toward basic and acidic residues. Positions 1–20 (MVQITEVKENQSSRESRTAA) are disordered. 73 to 80 (GPPATGKT) contacts ATP.

The protein belongs to the RuvB family. In terms of assembly, may form heterododecamers with RVB2. Component of the SWR1 chromatin remodeling complex, the INO80 chromatin remodeling complex, and of the R2TP complex.

It is found in the nucleus. It carries out the reaction ATP + H2O = ADP + phosphate + H(+). DNA helicase which participates in several chromatin remodeling complexes, including the SWR1 and the INO80 complexes. The SWR1 complex mediates the ATP-dependent exchange of histone H2A for the H2A variant HZT1 leading to transcriptional regulation of selected genes by chromatin remodeling. The INO80 complex remodels chromatin by shifting nucleosomes and is involved in DNA repair. Also involved in pre-rRNA processing. The chain is RuvB-like helicase 1 (RVB1) from Candida albicans (strain SC5314 / ATCC MYA-2876) (Yeast).